The sequence spans 450 residues: Phosphomethylpyrimidine synthase (450 aa).

Substrate contacts are provided by residues N80, M109, Y138, H173, 193–195 (SRG), 234–237 (DSLR), and E273. H277 is a Zn(2+) binding site. Residue Y300 coordinates substrate. Position 341 (H341) interacts with Zn(2+). Residues C421, C424, and C429 each contribute to the [4Fe-4S] cluster site.

This sequence belongs to the ThiC family. As to quaternary structure, homodimer. The cofactor is [4Fe-4S] cluster.

It carries out the reaction 5-amino-1-(5-phospho-beta-D-ribosyl)imidazole + S-adenosyl-L-methionine = 4-amino-2-methyl-5-(phosphooxymethyl)pyrimidine + CO + 5'-deoxyadenosine + formate + L-methionine + 3 H(+). The protein operates within cofactor biosynthesis; thiamine diphosphate biosynthesis. In terms of biological role, catalyzes the synthesis of the hydroxymethylpyrimidine phosphate (HMP-P) moiety of thiamine from aminoimidazole ribotide (AIR) in a radical S-adenosyl-L-methionine (SAM)-dependent reaction. The chain is Phosphomethylpyrimidine synthase from Campylobacter fetus subsp. fetus (strain 82-40).